The chain runs to 341 residues: MSEQHSPIISVQDVSKKLGDHILLSKVSFSVYPGEVFGIVGHSGSGKTTLLRCLDFLDMPTSGSISVAGFDNSLPTQKFSRRNFSKKVAYISQNYGLFSSKTVFENIAYPLRIHHSEMSKSEVEEQVYDTLNFLNLYHRHDAYPGNLSGGQKQKVAIARAIVCQPEVVLCDEITSALDPKSTENIIERLLQLNQERGITLVLVSHEIDVVKKICSHVLVMHQGAVEELGTTEELFLNSENSITNELFHEDINIAALSSCYFAEDREEVLRLNFSKELAIQGIISKVIQTGLVSINILSGNINLFRKSPMGFLIIVLEGEVEQRKKAKELLIELGVVIKEFY.

One can recognise an ABC transporter domain in the interval 9-247 (ISVQDVSKKL…SENSITNELF (239 aa)). Residue 41–48 (GHSGSGKT) coordinates ATP.

Belongs to the ABC transporter superfamily. Methionine importer (TC 3.A.1.24) family. In terms of assembly, the complex is composed of two ATP-binding proteins (MetN), two transmembrane proteins (MetI) and a solute-binding protein (MetQ).

It is found in the cell inner membrane. The enzyme catalyses L-methionine(out) + ATP + H2O = L-methionine(in) + ADP + phosphate + H(+). It catalyses the reaction D-methionine(out) + ATP + H2O = D-methionine(in) + ADP + phosphate + H(+). Part of the ABC transporter complex MetNIQ involved in methionine import. Responsible for energy coupling to the transport system. In Chlamydia pneumoniae (Chlamydophila pneumoniae), this protein is Methionine import ATP-binding protein MetN.